A 212-amino-acid polypeptide reads, in one-letter code: KxDL motif-containing protein CG10681 (212 aa).

The segment at arginine 128 to leucine 159 is disordered. The span at glutamate 148–proline 157 shows a compositional bias: low complexity.

This sequence belongs to the KXD1 family.

This Drosophila melanogaster (Fruit fly) protein is KxDL motif-containing protein CG10681.